We begin with the raw amino-acid sequence, 298 residues long: ATP synthase gamma chain (298 aa).

It belongs to the ATPase gamma chain family. In terms of assembly, F-type ATPases have 2 components, CF(1) - the catalytic core - and CF(0) - the membrane proton channel. CF(1) has five subunits: alpha(3), beta(3), gamma(1), delta(1), epsilon(1). CF(0) has three main subunits: a, b and c.

The protein resides in the cell inner membrane. In terms of biological role, produces ATP from ADP in the presence of a proton gradient across the membrane. The gamma chain is believed to be important in regulating ATPase activity and the flow of protons through the CF(0) complex. This chain is ATP synthase gamma chain, found in Francisella tularensis subsp. holarctica (strain FTNF002-00 / FTA).